The following is a 369-amino-acid chain: Spore membrane assembly protein 2 (369 aa).

The Cytoplasmic segment spans residues 1-6 (MLFPKR). The helical transmembrane segment at 7–27 (LIVWGVLLILSLSQFVLYLPA) threads the bilayer. At 28 to 220 (TTCTNSKGLR…NLAFILMMFN (193 aa)) the chain is on the lumenal side. The helical transmembrane segment at 221–241 (GMVFYFAVLEIIVGFLSICVV) threads the bilayer. Topologically, residues 242–265 (SAFGGALSVGKRHRLFPILLKSSS) are cytoplasmic. Residues 266-286 (SILVVIATLTILCNIVYLIAL) form a helical membrane-spanning segment. Residues 287 to 319 (KTLEPEEVTDVGSDNAAVHTTGWELLKVNVGSG) are Lumenal-facing. Residues 320–340 (FIMGLARYAIQWVLLVLAFLA) traverse the membrane as a helical segment. The Cytoplasmic segment spans residues 341–369 (ANHYKAKPKKSDKYTEDTSNSPSPDLMEK). A disordered region spans residues 348 to 369 (PKKSDKYTEDTSNSPSPDLMEK).

It belongs to the SMA2 family.

The protein localises to the prospore membrane. It localises to the endoplasmic reticulum. In terms of biological role, involved in spore and ascus formation. Required for the efficient assembly of the precursors of the prospore membrane to a continuous prospore membrane. The sequence is that of Spore membrane assembly protein 2 (SMA2) from Saccharomyces cerevisiae (strain YJM789) (Baker's yeast).